Reading from the N-terminus, the 386-residue chain is Heat-inducible transcription repressor HrcA (386 aa).

The protein belongs to the HrcA family.

In terms of biological role, negative regulator of class I heat shock genes (grpE-dnaK-dnaJ and groELS operons). Prevents heat-shock induction of these operons. The protein is Heat-inducible transcription repressor HrcA of Chlamydia abortus (strain DSM 27085 / S26/3) (Chlamydophila abortus).